We begin with the raw amino-acid sequence, 101 residues long: Large ribosomal subunit protein bL21 (101 aa).

This sequence belongs to the bacterial ribosomal protein bL21 family. Part of the 50S ribosomal subunit. Contacts protein L20.

Its function is as follows. This protein binds to 23S rRNA in the presence of protein L20. The chain is Large ribosomal subunit protein bL21 from Corynebacterium glutamicum (strain R).